Consider the following 350-residue polypeptide: Protein MGF 360-12L (350 aa).

The stretch at 57-89 is one ANK repeat; it reads DLNTALVKAVRENNYNLIKLFAEWGANINYGLV.

The protein belongs to the asfivirus MGF 360 family.

Its function is as follows. Plays a role in virus cell tropism, and may be required for efficient virus replication in macrophages. This is Protein MGF 360-12L from African swine fever virus (isolate Warthog/Namibia/Wart80/1980) (ASFV).